The chain runs to 162 residues: Crossover junction endodeoxyribonuclease RuvC (162 aa).

Active-site residues include Asp7, Glu67, and Asp140. Residues Asp7, Glu67, and Asp140 each coordinate Mg(2+).

This sequence belongs to the RuvC family. In terms of assembly, homodimer which binds Holliday junction (HJ) DNA. The HJ becomes 2-fold symmetrical on binding to RuvC with unstacked arms; it has a different conformation from HJ DNA in complex with RuvA. In the full resolvosome a probable DNA-RuvA(4)-RuvB(12)-RuvC(2) complex forms which resolves the HJ. Mg(2+) is required as a cofactor.

The protein resides in the cytoplasm. The enzyme catalyses Endonucleolytic cleavage at a junction such as a reciprocal single-stranded crossover between two homologous DNA duplexes (Holliday junction).. Functionally, the RuvA-RuvB-RuvC complex processes Holliday junction (HJ) DNA during genetic recombination and DNA repair. Endonuclease that resolves HJ intermediates. Cleaves cruciform DNA by making single-stranded nicks across the HJ at symmetrical positions within the homologous arms, yielding a 5'-phosphate and a 3'-hydroxyl group; requires a central core of homology in the junction. The consensus cleavage sequence is 5'-(A/T)TT(C/G)-3'. Cleavage occurs on the 3'-side of the TT dinucleotide at the point of strand exchange. HJ branch migration catalyzed by RuvA-RuvB allows RuvC to scan DNA until it finds its consensus sequence, where it cleaves and resolves the cruciform DNA. This is Crossover junction endodeoxyribonuclease RuvC from Heliobacterium modesticaldum (strain ATCC 51547 / Ice1).